The chain runs to 160 residues: MGIEGVLKKGFITTSADTVLNHMRTGSLWPVTFGLACCAVEMMHAGMARYDLDRFGIIFRPSPRQADLMIVAGTLTNKMAPALRRVYDQLAEPRWVLSMGSCANGGGYYHYSYSVVRGADRVVPVDVYVPGCPPTAEALIYGLIQLQQKIKRTSTIARDE.

Positions 37, 38, 102, and 132 each coordinate [4Fe-4S] cluster.

Belongs to the complex I 20 kDa subunit family. In terms of assembly, NDH-1 is composed of 14 different subunits. Subunits NuoB, C, D, E, F, and G constitute the peripheral sector of the complex. It depends on [4Fe-4S] cluster as a cofactor.

The protein resides in the cell inner membrane. It carries out the reaction a quinone + NADH + 5 H(+)(in) = a quinol + NAD(+) + 4 H(+)(out). Its function is as follows. NDH-1 shuttles electrons from NADH, via FMN and iron-sulfur (Fe-S) centers, to quinones in the respiratory chain. Couples the redox reaction to proton translocation (for every two electrons transferred, four hydrogen ions are translocated across the cytoplasmic membrane), and thus conserves the redox energy in a proton gradient. This is NADH-quinone oxidoreductase subunit B from Neisseria gonorrhoeae (strain ATCC 700825 / FA 1090).